The chain runs to 174 residues: Peptide methionine sulfoxide reductase MsrA (174 aa).

Residue C11 is part of the active site.

The protein belongs to the MsrA Met sulfoxide reductase family.

The catalysed reaction is L-methionyl-[protein] + [thioredoxin]-disulfide + H2O = L-methionyl-(S)-S-oxide-[protein] + [thioredoxin]-dithiol. It carries out the reaction [thioredoxin]-disulfide + L-methionine + H2O = L-methionine (S)-S-oxide + [thioredoxin]-dithiol. Its function is as follows. Has an important function as a repair enzyme for proteins that have been inactivated by oxidation. Catalyzes the reversible oxidation-reduction of methionine sulfoxide in proteins to methionine. The polypeptide is Peptide methionine sulfoxide reductase MsrA (Haloquadratum walsbyi (strain DSM 16790 / HBSQ001)).